The sequence spans 190 residues: MEKVPGDMEIERRERSEELSEAERKAVQATWARLYANCEDVGVAILVRFFVNFPSAKQYFSQFRHMEDPLEMERSPQLRKHACRVMGALNTVVENLHDPDKVSSVLALVGKAHALKHKVEPMYFKILSGVILEVIAEEFANDFPVETQKAWAKLRGLIYSHVTAAYKEVGWVQQVPNTTTPPATLPSSGP.

The interval 1-21 (MEKVPGDMEIERRERSEELSE) is disordered. Positions 18–167 (ELSEAERKAV…IYSHVTAAYK (150 aa)) constitute a Globin domain. Cys38 and Cys83 form a disulfide bridge. Heme b contacts are provided by His81 and His113.

It belongs to the globin family. As to quaternary structure, monomeric. Homodimer; disulfide-linked in vitro. Also homooligomeric in vitro. Post-translationally, the formation of an intramolecular disulfide bond between cysteines Cys-38 and Cys-83 specifically enhances the nitrite reductase activity. Expressed in brain and retina by non-neuronal cells (at protein level). This is the major globin expressed in vascular smooth muscle and is not present in the endothelium (at protein level).

It localises to the cytoplasm. It is found in the nucleus. The catalysed reaction is Fe(II)-heme b-[protein] + nitric oxide + O2 = Fe(III)-heme b-[protein] + nitrate. It catalyses the reaction 2 superoxide + 2 H(+) = H2O2 + O2. The enzyme catalyses Fe(III)-heme b-[protein] + nitric oxide + H2O = Fe(II)-heme b-[protein] + nitrite + 2 H(+). It carries out the reaction H2O2 + AH2 = A + 2 H2O. Its activity is regulated as follows. The nitric oxide dioxygenase activity is activated by a reducing system composed of cytochrome b5, its upstream reductase CYB5R3 and NADH. Its function is as follows. Probable multifunctional globin with a hexacoordinated heme iron required for the catalysis of various reactions depending on redox condition of the cell as well as oxygen availability. Has a nitric oxide dioxygenase (NOD) activity and is most probably involved in cell-mediated and oxygen-dependent nitric oxide consumption. By scavenging this second messenger may regulate several biological processes including endothelium-mediated vasodilation and vascular tone. Under normoxic conditions functions as a nitric oxide dioxygenase (NOD) but under hypoxic conditions the globin may switch its function to that of a nitrite (NO2) reductase (NiR), generating nitric oxide. Could also have peroxidase and superoxide dismutase activities, detoxifying reactive oxygen species and protecting cells against oxidative stress. Also binds dioxygen with low affinity and could function as an oxygen sensor but has probably no function as a respiratory oxygen carrier. This is Cytoglobin from Mus musculus (Mouse).